The following is a 298-amino-acid chain: Tyrosine recombinase XerC (298 aa).

A Core-binding (CB) domain is found at 1–83 (MHAAVERFLH…ALSRFADHLV (83 aa)). Residues 104-283 (HLPRPVDVDQ…DWQHLADAYD (180 aa)) form the Tyr recombinase domain. Catalysis depends on residues Arg144, Lys166, His235, Arg238, and His261. Tyr270 functions as the O-(3'-phospho-DNA)-tyrosine intermediate in the catalytic mechanism.

The protein belongs to the 'phage' integrase family. XerC subfamily. In terms of assembly, forms a cyclic heterotetrameric complex composed of two molecules of XerC and two molecules of XerD.

The protein localises to the cytoplasm. Site-specific tyrosine recombinase, which acts by catalyzing the cutting and rejoining of the recombining DNA molecules. The XerC-XerD complex is essential to convert dimers of the bacterial chromosome into monomers to permit their segregation at cell division. It also contributes to the segregational stability of plasmids. This Chromohalobacter salexigens (strain ATCC BAA-138 / DSM 3043 / CIP 106854 / NCIMB 13768 / 1H11) protein is Tyrosine recombinase XerC.